The sequence spans 746 residues: F-box only protein 30 (746 aa).

The TRAF-type zinc-finger motif lies at 49-110 (EHRLLCPFER…SYSDRKSYES (62 aa)). Disordered stretches follow at residues 222–241 (MDEE…DQDH) and 247–266 (IGAV…QAEQ). The span at 225–241 (ENNKESFQDKNLKDQDH) shows a compositional bias: basic and acidic residues. The span at 256 to 266 (SGTSQNAQAEQ) shows a compositional bias: polar residues. Ser383 carries the phosphoserine modification. The F-box domain maps to 611–659 (SDHLSSLPFEVLQHIAGFLDGFSLCQLACVSRLMRDVCGSLLQSRGMVI).

As to quaternary structure, part of a SCF (SKP1-cullin-F-box) protein ligase complex. Interacts with SKP1, CUL1 and RBX1/ROC1. In terms of processing, auto-ubiquitinated. Post-translationally, may be neddylated. Neddylation may be required for E3 ligase activity, since it was observed only after purification with o-phenanthroline.

It functions in the pathway protein modification; protein ubiquitination. Substrate-recognition component of the SCF (SKP1-CUL1-F-box protein)-type E3 ubiquitin ligase complex. Required for muscle atrophy following denervation. This chain is F-box only protein 30 (Fbxo30), found in Mus musculus (Mouse).